The chain runs to 108 residues: ATP synthase subunit H, mitochondrial (108 aa).

The transit peptide at 1–19 (MFTLRAASRRAFSTSIARR) directs the protein to the mitochondrion. Disordered stretches follow at residues 40-60 (AKDA…KPPV) and 75-108 (APVD…GVAV). The span at 47-60 (VKPWSAPSAPKPPV) shows a compositional bias: low complexity. A compositionally biased stretch (polar residues) spans 81 to 92 (GQTNSKSASPQA). Residues 93–108 (NDEDWLAFEEEEGVAV) are compositionally biased toward acidic residues.

As to quaternary structure, F-type ATP synthases have 2 components, the catalytic core F(1) and the membrane-embedded component F(0), linked together by a central stalk and a peripheral stalk. The central stalk, also called rotor shaft, is often seen as part of F(1). The peripheral stalk is seen as part of F(0). F(0) contains the membrane channel next to the rotor. F-type ATP synthases form dimers but each monomer functions independently in ATP generation. The dimer consists of 17 different polypeptides: ATP1 (subunit alpha, 3 molecules per monomer, part of F(1)), ATP2 (subunit beta, 3 copies per monomer, part of F(1)), ATP3 (subunit gamma, part of the central stalk), ATP4 (subunit b, part of the peripheral stalk), ATP5/OSCP (subunit 5/OSCP, part of the peripheral stalk), ATP6 (subunit a, part of the peripheral stalk), ATP7 (subunit d, part of the peripheral stalk), ATP8 (subunit 8, part of the peripheral stalk), OLI1 (subunit c, part of the rotor, 10 molecules per monomer), ATP14 (subunit H, part of the peripheral stalk), ATP15 (subunit epsilon, part of the central stalk), ATP16 (subunit delta, part of the central stalk), ATP17 (subunit f, part of the peripheral stalk), ATP18 (subunit i/j, part of the peripheral stalk), ATP19 (subunit k, dimer-specific, at interface between monomers), ATP20 (subunit g, at interface between monomers), TIM11 (subunit e, at interface between monomers).

It is found in the mitochondrion inner membrane. Mitochondrial membrane ATP synthase (F(1)F(0) ATP synthase or Complex V) produces ATP from ADP in the presence of a proton gradient across the membrane which is generated by electron transport complexes of the respiratory chain. F-type ATP synthases consist of two structural domains, F(1) - containing the extramembraneous catalytic core, and F(0) - containing the membrane proton channel, linked together by a central stalk and a peripheral stalk. During catalysis, ATP synthesis in the catalytic domain of F(1) is coupled via a rotary mechanism of the central stalk subunits to proton translocation. Part of the peripheral stalk. The polypeptide is ATP synthase subunit H, mitochondrial (Yarrowia lipolytica (strain CLIB 122 / E 150) (Yeast)).